The primary structure comprises 143 residues: Large ribosomal subunit protein uL13 (143 aa).

This sequence belongs to the universal ribosomal protein uL13 family. In terms of assembly, part of the 50S ribosomal subunit.

Its function is as follows. This protein is one of the early assembly proteins of the 50S ribosomal subunit, although it is not seen to bind rRNA by itself. It is important during the early stages of 50S assembly. The polypeptide is Large ribosomal subunit protein uL13 (Solibacter usitatus (strain Ellin6076)).